Reading from the N-terminus, the 356-residue chain is DNA integrity scanning protein DisA (356 aa).

The region spanning 7–147 is the DAC domain; it reads NKNMLYALKM…EKYVVEDISK (141 aa). ATP contacts are provided by residues Gly74, Leu92, and 105–109; that span reads TRHRT.

Belongs to the DisA family. As to quaternary structure, homooctamer. Mg(2+) is required as a cofactor.

The catalysed reaction is 2 ATP = 3',3'-c-di-AMP + 2 diphosphate. In terms of biological role, participates in a DNA-damage check-point that is active prior to asymmetric division when DNA is damaged. DisA forms globular foci that rapidly scan along the chromosomes during sporulation, searching for lesions. When a lesion is present, DisA pauses at the lesion site. This triggers a cellular response that culminates in a temporary block in sporulation initiation. Functionally, also has diadenylate cyclase activity, catalyzing the condensation of 2 ATP molecules into cyclic di-AMP (c-di-AMP). c-di-AMP acts as a signaling molecule that couples DNA integrity with progression of sporulation. The rise in c-di-AMP level generated by DisA while scanning the chromosome, operates as a positive signal that advances sporulation; upon encountering a lesion, the DisA focus arrests at the damaged site and halts c-di-AMP synthesis. In Clostridioides difficile (strain 630) (Peptoclostridium difficile), this protein is DNA integrity scanning protein DisA.